Reading from the N-terminus, the 584-residue chain is Negative regulator of RAS-cAMP pathway (584 aa).

Thr-25 carries the post-translational modification Phosphothreonine. Disordered regions lie at residues 95–167 (PIKP…STTS), 209–279 (PLQS…SKTS), 291–320 (SEDE…DDYN), 343–366 (NLDS…HDPV), and 381–432 (SNSN…SLKT). Composition is skewed to polar residues over residues 114 to 127 (PPTT…TRPM), 229 to 254 (CIDN…SFPQ), and 267 to 278 (NDQNGQLSLSKT). Ser-247 and Ser-276 each carry phosphoserine. The span at 307-320 (FYADEDDEEYDDYN) shows a compositional bias: acidic residues. Residues 343–363 (NLDSTKSSVSSANTINSNTSH) show a composition bias toward polar residues. Over residues 381–392 (SNSNNHNTAHSE) the composition is skewed to low complexity. Over residues 398 to 432 (VSPTPQSSHSNIGPQPQQNPPSANGIKQQKPSLKT) the composition is skewed to polar residues. At Ser-442 the chain carries Phosphoserine. At Ser-518 the chain carries Phosphoserine; by PKA. The tract at residues 551–584 (DNTSIANSNGNGNDDTSNQRTEALGRKTSNGGRI) is disordered. The span at 557 to 568 (NSNGNGNDDTSN) shows a compositional bias: low complexity.

It is found in the nucleus. Its function is as follows. Negative regulator of Ras-cAMP pathway. Involved in transcriptional regulation of galactose-inducible genes. The sequence is that of Negative regulator of RAS-cAMP pathway (MKS1) from Saccharomyces cerevisiae (strain ATCC 204508 / S288c) (Baker's yeast).